Here is a 207-residue protein sequence, read N- to C-terminus: Thiamine-phosphate synthase (207 aa).

Residues 35–39 (QYRDK) and asparagine 67 contribute to the 4-amino-2-methyl-5-(diphosphooxymethyl)pyrimidine site. Mg(2+) is bound by residues aspartate 68 and aspartate 86. Threonine 105 contacts 4-amino-2-methyl-5-(diphosphooxymethyl)pyrimidine. 132–134 (SNT) provides a ligand contact to 2-[(2R,5Z)-2-carboxy-4-methylthiazol-5(2H)-ylidene]ethyl phosphate. 4-amino-2-methyl-5-(diphosphooxymethyl)pyrimidine is bound at residue lysine 135. 2-[(2R,5Z)-2-carboxy-4-methylthiazol-5(2H)-ylidene]ethyl phosphate is bound at residue glycine 162.

This sequence belongs to the thiamine-phosphate synthase family. Requires Mg(2+) as cofactor.

It carries out the reaction 2-[(2R,5Z)-2-carboxy-4-methylthiazol-5(2H)-ylidene]ethyl phosphate + 4-amino-2-methyl-5-(diphosphooxymethyl)pyrimidine + 2 H(+) = thiamine phosphate + CO2 + diphosphate. It catalyses the reaction 2-(2-carboxy-4-methylthiazol-5-yl)ethyl phosphate + 4-amino-2-methyl-5-(diphosphooxymethyl)pyrimidine + 2 H(+) = thiamine phosphate + CO2 + diphosphate. The enzyme catalyses 4-methyl-5-(2-phosphooxyethyl)-thiazole + 4-amino-2-methyl-5-(diphosphooxymethyl)pyrimidine + H(+) = thiamine phosphate + diphosphate. The protein operates within cofactor biosynthesis; thiamine diphosphate biosynthesis; thiamine phosphate from 4-amino-2-methyl-5-diphosphomethylpyrimidine and 4-methyl-5-(2-phosphoethyl)-thiazole: step 1/1. In terms of biological role, condenses 4-methyl-5-(beta-hydroxyethyl)thiazole monophosphate (THZ-P) and 2-methyl-4-amino-5-hydroxymethyl pyrimidine pyrophosphate (HMP-PP) to form thiamine monophosphate (TMP). This is Thiamine-phosphate synthase from Pseudomonas fluorescens (strain Pf0-1).